The primary structure comprises 63 residues: Large ribosomal subunit protein eL37 (63 aa).

Cys-20, Cys-23, Cys-35, and Cys-38 together coordinate Zn(2+). The C4-type zinc-finger motif lies at 20–38 (CRRCGHHSFNVRKGYCAHC).

It belongs to the eukaryotic ribosomal protein eL37 family. The cofactor is Zn(2+).

Its function is as follows. Binds to the 23S rRNA. This chain is Large ribosomal subunit protein eL37, found in Thermofilum pendens (strain DSM 2475 / Hrk 5).